Here is a 150-residue protein sequence, read N- to C-terminus: uncharacterized protein (150 aa).

Transmembrane regions (helical) follow at residues 12-30, 40-62, 74-96, and 106-128; these read IVQR…YFLF, RLLS…LVLF, IRRT…VLSG, and ALID…SRAV.

It is found in the cell membrane. This is an uncharacterized protein from Archaeoglobus fulgidus (strain ATCC 49558 / DSM 4304 / JCM 9628 / NBRC 100126 / VC-16).